The chain runs to 162 residues: NADH-quinone oxidoreductase subunit I (162 aa).

2 4Fe-4S ferredoxin-type domains span residues 53–83 and 93–122; these read LRRYPNGEERCIACKLCEAVCPALAITIEAE and TRYDIDMTKCIYCGLCQEACPVDAIVEGPN. The [4Fe-4S] cluster site is built by cysteine 63, cysteine 66, cysteine 69, cysteine 73, cysteine 102, cysteine 105, cysteine 108, and cysteine 112.

Belongs to the complex I 23 kDa subunit family. In terms of assembly, NDH-1 is composed of 14 different subunits. Subunits NuoA, H, J, K, L, M, N constitute the membrane sector of the complex. It depends on [4Fe-4S] cluster as a cofactor.

Its subcellular location is the cell inner membrane. The enzyme catalyses a quinone + NADH + 5 H(+)(in) = a quinol + NAD(+) + 4 H(+)(out). NDH-1 shuttles electrons from NADH, via FMN and iron-sulfur (Fe-S) centers, to quinones in the respiratory chain. The immediate electron acceptor for the enzyme in this species is believed to be ubiquinone. Couples the redox reaction to proton translocation (for every two electrons transferred, four hydrogen ions are translocated across the cytoplasmic membrane), and thus conserves the redox energy in a proton gradient. This chain is NADH-quinone oxidoreductase subunit I, found in Rhodospirillum centenum (strain ATCC 51521 / SW).